We begin with the raw amino-acid sequence, 576 residues long: Trehalase 2 (576 aa).

This sequence belongs to the glycosyl hydrolase 15 family.

The catalysed reaction is alpha,alpha-trehalose + H2O = alpha-D-glucose + beta-D-glucose. The protein operates within glycan degradation; trehalose degradation; D-glucose from alpha,alpha-trehalose: step 1/1. Catalyzes the hydrolysis of alpha,alpha-trehalose into two molecules of D-glucose. The chain is Trehalase 2 (treH2) from Sulfolobus acidocaldarius (strain ATCC 33909 / DSM 639 / JCM 8929 / NBRC 15157 / NCIMB 11770).